Reading from the N-terminus, the 122-residue chain is Large ribosomal subunit protein uL14 (122 aa).

The protein belongs to the universal ribosomal protein uL14 family. Part of the 50S ribosomal subunit. Forms a cluster with proteins L3 and L19. In the 70S ribosome, L14 and L19 interact and together make contacts with the 16S rRNA in bridges B5 and B8.

Its function is as follows. Binds to 23S rRNA. Forms part of two intersubunit bridges in the 70S ribosome. The protein is Large ribosomal subunit protein uL14 of Halothermothrix orenii (strain H 168 / OCM 544 / DSM 9562).